The chain runs to 389 residues: N-terminal EF-hand calcium-binding protein 2 (389 aa).

Residue arginine 10 is modified to Omega-N-methylarginine. Arginine 42 is subject to Asymmetric dimethylarginine. EF-hand domains are found at residues 63–98 and 99–132; these read GGTA…GVLN and EKEL…HMGD. Ca(2+)-binding residues include aspartate 76, asparagine 78, aspartate 80, lysine 82, glutamate 87, aspartate 110, aspartate 112, threonine 114, histidine 116, and glutamate 121. Residues 173–198 adopt a coiled-coil conformation; sequence LKETANQIQSLLSSVESAVEAIEEQT. The 89-residue stretch at 289 to 377 folds into the ABM domain; that stretch reads QLVRQEMAVC…LSQPEALSQI (89 aa).

As to quaternary structure, interacts (calcium-dependent) with ADORA2A and GRM5. Expressed in the iris, in the ciliary margin of the retina and in the inner portion of the neural retina. Expressed in the spinal dorsal horn with especially strong expression in lamina IIi; found in excitory synaptic boutons (at protein level).

Its subcellular location is the cytoplasm. It localises to the cell projection. The protein localises to the dendrite. The protein resides in the axon. It is found in the cell membrane. In terms of biological role, may act as a signaling scaffold protein that senses intracellular calcium. Can modulate ligand-induced internalization of ADORA2A and coupling efficiency of mGluR5/GRM5; for both receptors may regulate signaling activity such as promoting MAPK1/3 (ERK1/2) activation. This Mus musculus (Mouse) protein is N-terminal EF-hand calcium-binding protein 2 (Necab2).